The primary structure comprises 219 residues: Probable glutathione S-transferase MSR-1 (219 aa).

Residues 4–83 (NNVVLLDFSG…YIDEVWHEKC (80 aa)) form the GST N-terminal domain. Residues Ser14, Lys41, Ile55, and 67–68 (ES) contribute to the glutathione site. A GST C-terminal domain is found at 89 to 208 (DPYQRSQARF…LPHPHKIYDF (120 aa)).

This sequence belongs to the GST superfamily. HSP26 family.

It catalyses the reaction RX + glutathione = an S-substituted glutathione + a halide anion + H(+). Its function is as follows. May play an important role in hormonal and growth regulatory responses. This is Probable glutathione S-transferase MSR-1 (MSR-1) from Nicotiana plumbaginifolia (Leadwort-leaved tobacco).